The sequence spans 357 residues: Histidine biosynthesis bifunctional protein HisB (357 aa).

A histidinol-phosphatase region spans residues 1-167 (MNDKILFIDR…IHKYLMQNSH (167 aa)). Asp-9 acts as the Nucleophile in catalysis. Mg(2+)-binding residues include Asp-9 and Asp-11. Asp-11 serves as the catalytic Proton donor. Residues Cys-93, His-95, Cys-101, and Cys-103 each contribute to the Zn(2+) site. Asp-130 lines the Mg(2+) pocket. The tract at residues 168–357 (RVAHIQRITN…QIPSSKGILL (190 aa)) is imidazoleglycerol-phosphate dehydratase.

This sequence in the N-terminal section; belongs to the histidinol-phosphatase family. The protein in the C-terminal section; belongs to the imidazoleglycerol-phosphate dehydratase family. Mg(2+) serves as cofactor. Zn(2+) is required as a cofactor.

It is found in the cytoplasm. It catalyses the reaction D-erythro-1-(imidazol-4-yl)glycerol 3-phosphate = 3-(imidazol-4-yl)-2-oxopropyl phosphate + H2O. The enzyme catalyses L-histidinol phosphate + H2O = L-histidinol + phosphate. Its pathway is amino-acid biosynthesis; L-histidine biosynthesis; L-histidine from 5-phospho-alpha-D-ribose 1-diphosphate: step 6/9. It participates in amino-acid biosynthesis; L-histidine biosynthesis; L-histidine from 5-phospho-alpha-D-ribose 1-diphosphate: step 8/9. This is Histidine biosynthesis bifunctional protein HisB from Blochmanniella floridana.